Reading from the N-terminus, the 514-residue chain is GMP synthase [glutamine-hydrolyzing] (514 aa).

The 191-residue stretch at 9–199 folds into the Glutamine amidotransferase type-1 domain; the sequence is KIIVLDFGSQ…ALNVCGCKGD (191 aa). Cysteine 86 functions as the Nucleophile in the catalytic mechanism. Active-site residues include histidine 173 and glutamate 175. In terms of domain architecture, GMPS ATP-PPase spans 200-389; that stretch reads WTMENFSEVE…LGMPDAIVWR (190 aa). An ATP-binding site is contributed by 227–233; the sequence is SGGVDSS.

As to quaternary structure, homodimer.

It carries out the reaction XMP + L-glutamine + ATP + H2O = GMP + L-glutamate + AMP + diphosphate + 2 H(+). The protein operates within purine metabolism; GMP biosynthesis; GMP from XMP (L-Gln route): step 1/1. In terms of biological role, catalyzes the synthesis of GMP from XMP. This Listeria monocytogenes serotype 4b (strain F2365) protein is GMP synthase [glutamine-hydrolyzing].